Consider the following 343-residue polypeptide: Protein SOSEKI 4 (343 aa).

The interval arginine 18–aspartate 109 is DIX-like oligomerization domain. Residues arginine 148 to threonine 194 form a disordered region. Residues serine 184–threonine 194 are compositionally biased toward polar residues. The short motif at cysteine 233–glycine 234 is the Association to cell membranes element.

It belongs to the SOSEKI family. In terms of assembly, homodimer. Forms long polymer filaments with other SOKs proteins polymers (e.g. SOK1, SOK2, SOK3 and SOK4) crucial for polar localization and biological activity. Binds to ANGUSTIFOLIA (AN). As to expression, expressed during embryogenesis and in roots.

The protein resides in the cell membrane. Its function is as follows. SOSEKI proteins (SOK1-5) locally interpret global polarity cues and can influence cell division orientation to coordinate cell polarization relative to body axes, probably by guiding ANGUSTIFOLIA (AN) polarized localization. Positive regulator of auxin (indole-3-acetic acid, IAA) biosynthesis and signaling pathway leading to the modulation of seedling growth, plant and inflorescence development. Negative regulator of stress responses (e.g. salinity and osmotic stress). The polypeptide is Protein SOSEKI 4 (Arabidopsis thaliana (Mouse-ear cress)).